The chain runs to 372 residues: Histidinol-phosphate aminotransferase (372 aa).

K234 is modified (N6-(pyridoxal phosphate)lysine).

Belongs to the class-II pyridoxal-phosphate-dependent aminotransferase family. Histidinol-phosphate aminotransferase subfamily. In terms of assembly, homodimer. Pyridoxal 5'-phosphate is required as a cofactor.

It catalyses the reaction L-histidinol phosphate + 2-oxoglutarate = 3-(imidazol-4-yl)-2-oxopropyl phosphate + L-glutamate. The protein operates within amino-acid biosynthesis; L-histidine biosynthesis; L-histidine from 5-phospho-alpha-D-ribose 1-diphosphate: step 7/9. In Corynebacterium efficiens (strain DSM 44549 / YS-314 / AJ 12310 / JCM 11189 / NBRC 100395), this protein is Histidinol-phosphate aminotransferase (hisC).